Reading from the N-terminus, the 367-residue chain is Alginate lyase (367 aa).

Positions 1–27 (MKTSHLIRIALPGALAAALLASQVSQA) are cleaved as a signal peptide. Substrate-binding positions include 65–66 (SK), 138–139 (HT), and tyrosine 256.

It belongs to the polysaccharide lyase 5 family.

It is found in the periplasm. It catalyses the reaction Eliminative cleavage of alginate to give oligosaccharides with 4-deoxy-alpha-L-erythro-hex-4-enuronosyl groups at their non-reducing ends and beta-D-mannuronate at their reducing end.. Functionally, catalyzes the depolymerization of alginate by cleaving the beta-1,4 glycosidic bond between two adjacent sugar residues via a beta-elimination mechanism. May serve to degrade mislocalized alginate that is trapped in the periplasmic space. This is Alginate lyase from Pseudomonas aeruginosa (strain LESB58).